A 483-amino-acid chain; its full sequence is MHQKTIAELKQDLRDKTISSVELTQHFLDRIKTINPTLNSFISITEEYALTQAKAADARLAKGEATSLTGIPIAQKDIFCTKDIKTSCGSKMLDNFIAPYDATVVEQLNKAGAILIGKTNMDEFAMGSSNENSYFGAVKNPWDLERVPGGSSGGSAAAVAARLVPGATGTDTGGSIRQPAALCGITGLKPTYGRVSRYGMIAFASSLDQAGPMAQTAEDAALLLNALAGHDAKDSTSINKNVPDYTATLTTSLEGLKVGLPKEYFGEGLNSSIAESIETVKKTLEKMGATFIEIQLPHTDFAAPAYYVLAPAECSSNLARYDGVRYGYRCDKPVDLDDLYKRSRTEGFGSEVKRRIMIGTYVLSAGYYDAYYLKAQKIRRLIRDDFMKAFETVDVILTPATPTPAFKLNEKIADPVAMYLSDVYTIAVNLAGLPAIAFPAGFMDQLPIGAQLIGNYFEEARLLNITHRYQQETDWHKQSPKLR.

Active-site charge relay system residues include Lys-76 and Ser-151. Ser-175 acts as the Acyl-ester intermediate in catalysis.

The protein belongs to the amidase family. GatA subfamily. Heterotrimer of A, B and C subunits.

The catalysed reaction is L-glutamyl-tRNA(Gln) + L-glutamine + ATP + H2O = L-glutaminyl-tRNA(Gln) + L-glutamate + ADP + phosphate + H(+). Allows the formation of correctly charged Gln-tRNA(Gln) through the transamidation of misacylated Glu-tRNA(Gln) in organisms which lack glutaminyl-tRNA synthetase. The reaction takes place in the presence of glutamine and ATP through an activated gamma-phospho-Glu-tRNA(Gln). This is Glutamyl-tRNA(Gln) amidotransferase subunit A from Coxiella burnetii (strain CbuK_Q154) (Coxiella burnetii (strain Q154)).